Reading from the N-terminus, the 198-residue chain is Large ribosomal subunit protein bL9 (198 aa).

The protein belongs to the bacterial ribosomal protein bL9 family.

In terms of biological role, binds to the 23S rRNA. The polypeptide is Large ribosomal subunit protein bL9 (Bartonella tribocorum (strain CIP 105476 / IBS 506)).